A 675-amino-acid chain; its full sequence is Parasporal crystal protein Cry18Ba (675 aa).

This sequence belongs to the delta endotoxin family.

Its function is as follows. Binds to the brush border membrane vesicles of scarab larvae and damages the gut wall somehow to allow the vegetative cells of P.popilliae to enter the hemolymph. The protein is Parasporal crystal protein Cry18Ba (cry18Ba) of Paenibacillus popilliae (Bacillus popilliae).